A 542-amino-acid chain; its full sequence is Tripartite motif-containing protein 26 (542 aa).

The RING-type zinc finger occupies Cys16–Lys57. A B box-type zinc finger spans residues Gln97 to Val138. 4 residues coordinate Zn(2+): Cys102, His105, Cys124, and His130. Residues Gln197–Glu243 adopt a coiled-coil conformation. The B30.2/SPRY domain maps to Arg298–Pro542. Positions Arg379 to Cys440 are disordered. Composition is skewed to acidic residues over residues Ser383 to Gly405 and Trp413 to Gln437. Positions Glu411–Cys440 form a coiled coil.

Belongs to the TRIM/RBCC family. Interacts with TBK1; this interaction bridges together TBK1 and NEMO in order to activate TBK1. Interacts with INCA1. Post-translationally, autoubiquitinates upon viral infection. In turn, autoubiquitinated TRIM26 recruits NEMO and bridges TBK1-NEMO interaction.

The protein localises to the cytoplasm. It is found in the nucleus. The enzyme catalyses S-ubiquitinyl-[E2 ubiquitin-conjugating enzyme]-L-cysteine + [acceptor protein]-L-lysine = [E2 ubiquitin-conjugating enzyme]-L-cysteine + N(6)-ubiquitinyl-[acceptor protein]-L-lysine.. Its function is as follows. E3 ubiquitin-protein ligase which regulates the IFN-beta production and antiviral response downstream of various DNA-encoded pattern-recognition receptors (PRRs). Also plays a central role in determining the response to different forms of oxidative stress by controlling levels of DNA glycosylases NEIL1, NEIL3 and NTH1 that are involved in repair of damaged DNA. Promotes nuclear IRF3 ubiquitination and proteasomal degradation. Bridges together TBK1 and NEMO during the innate response to viral infection leading to the activation of TBK1. Positively regulates LPS-mediated inflammatory innate immune response by catalyzing the 'Lys-11'-linked polyubiquitination of TAB1 to enhance its activation and subsequent NF-kappa-B and MAPK signaling. In a manner independent of its catalytic activity, inhibits WWP2, a SOX2-directed E3 ubiquitin ligase, and thus protects SOX2 from polyubiquitination and proteasomal degradation. Ubiquitinates the histone acetyltransferase protein complex component PHF20 and thereby triggers its degradation in the nucleus after its recruitment by the histone demethylase KDM6B, serving as a scaffold protein. Upon induction by TGF-beta, ubiquitinates the TFIID component TAF7 for proteasomal degradation. Induces ferroptosis by ubiquitinating SLC7A11, a critical protein for lipid reactive oxygen species (ROS) scavenging. This is Tripartite motif-containing protein 26 (Trim26) from Rattus norvegicus (Rat).